The primary structure comprises 237 residues: Coat protein (237 aa).

Residues 1–24 (MSAPASTTQATGSTTSTTTKTAGA) are disordered.

This sequence belongs to the potexvirus capsid protein family.

Its subcellular location is the virion. Required for genome encapsidation. Forms ribonucleoprotein complexes along with TGB1 helicase and viral RNA. This Brassica campestris (Field mustard) protein is Coat protein.